The primary structure comprises 77 residues: Small ribosomal subunit protein uS17 (77 aa).

Belongs to the universal ribosomal protein uS17 family. In terms of assembly, part of the 30S ribosomal subunit.

Its function is as follows. One of the primary rRNA binding proteins, it binds specifically to the 5'-end of 16S ribosomal RNA. This Rickettsia akari (strain Hartford) protein is Small ribosomal subunit protein uS17.